The following is a 789-amino-acid chain: Ribonucleoside-diphosphate reductase large subunit (789 aa).

Substrate is bound by residues Thr207, 222–223 (SC), Gly253, 435–439 (NLCTE), and 620–624 (PTVSS). An intrachain disulfide couples Cys223 to Cys452. Catalysis depends on Asn435, which acts as the Proton acceptor. Cys437 acts as the Cysteine radical intermediate in catalysis. Residue Glu439 is the Proton acceptor of the active site.

It belongs to the ribonucleoside diphosphate reductase large chain family. Heterotetramer composed of a homodimer of the large subunit (R1) and a homodimer of the small subunit (R2). Larger multisubunit protein complex are also active, composed of (R1)n(R2)n.

It catalyses the reaction a 2'-deoxyribonucleoside 5'-diphosphate + [thioredoxin]-disulfide + H2O = a ribonucleoside 5'-diphosphate + [thioredoxin]-dithiol. Its function is as follows. Ribonucleoside-diphosphate reductase holoenzyme provides the precursors necessary for viral DNA synthesis. Allows virus growth in non-dividing cells, as well as reactivation from latency in infected hosts. Catalyzes the biosynthesis of deoxyribonucleotides from the corresponding ribonucleotides. The sequence is that of Ribonucleoside-diphosphate reductase large subunit from Equus caballus (Horse).